The sequence spans 202 residues: MKQLIFLLICLSCGTCSIYALKCRSQEGLSEAELKRTVRNCMHRQDEDEDRGRGGQGRQGNGYEYGYGMDHDQEEQDRNPGNRGGYGNRRQRGLRQSDGRNHTSNDGGQCVAQCFFEEMNMVDGNGMPDRRKVSYLLTKDLRDRELRNFFTDTVQQCFRYLESNGRGRHHKCSAARELVKCMSEYAKAQCEDWEEHGNMLFN.

The N-terminal stretch at 1-20 (MKQLIFLLICLSCGTCSIYA) is a signal peptide. Residues 43–53 (HRQDEDEDRGR) are compositionally biased toward basic and acidic residues. The disordered stretch occupies residues 43-105 (HRQDEDEDRG…QSDGRNHTSN (63 aa)). Over residues 54–65 (GGQGRQGNGYEY) the composition is skewed to gly residues.

It belongs to the PBP/GOBP family. Expressed in non-neuronal cells in hygrosensitive sensilla in the second chamber of the sacculus of the antenna third segment (at protein level).

Its subcellular location is the secreted. In terms of biological role, odorant-binding protein required for hygrotaxis behavior in humidity-detecting sensilla. The sequence is that of Odorant-binding protein 59a from Drosophila melanogaster (Fruit fly).